We begin with the raw amino-acid sequence, 350 residues long: Putative ATP-binding protein BRA0745/BS1330_II0738 (350 aa).

One can recognise an ABC transporter domain in the interval 4 to 234 (VSLRGISKTF…PANKFVAGFI (231 aa)). Position 36-43 (36-43 (GPSGCGKS)) interacts with ATP.

The protein belongs to the ABC transporter superfamily. As to quaternary structure, the complex is composed of two ATP-binding proteins (BRA0745), two transmembrane proteins (BRA0749) and a solute-binding protein (BRA0748).

Its subcellular location is the cell inner membrane. Its function is as follows. Probably part of an ABC transporter complex. Probably responsible for energy coupling to the transport system. The chain is Putative ATP-binding protein BRA0745/BS1330_II0738 from Brucella suis biovar 1 (strain 1330).